The following is a 485-amino-acid chain: Sperm-associated antigen 8 (485 aa).

3 disordered regions span residues 1–42, 75–98, and 127–215; these read METN…SPRS, KTPA…EPCA, and TTTD…CIPP. Over residues 132-150 the composition is skewed to low complexity; sequence SSNPGPVPGSSSGPVLGSS. A compositionally biased stretch (gly residues) spans 151–191; sequence SGAGHGSGSGSGPGCGSVPGSGSGPGPGSGPGSGPGHGSGS. Mn stretches follow at residues 327-340 and 379-393; these read SSTT…PPGN and ESVT…LAQA.

Belongs to the SPAG8 family. Microtubule inner protein component of sperm flagellar doublet microtubules. Interacts with FHL5 (via second LIM domain). Interacts with RANBP9. Expressed in testis (germ cells), but not in liver, kidney, prostate and small intestine. Expressed in airway epithelial cells.

It is found in the cytoplasm. Its subcellular location is the nucleus. It localises to the cytoplasmic vesicle. The protein localises to the secretory vesicle. The protein resides in the acrosome. It is found in the cytoskeleton. Its subcellular location is the microtubule organizing center. It localises to the spindle. The protein localises to the cilium axoneme. The protein resides in the flagellum axoneme. Microtubule inner protein (MIP) part of the dynein-decorated doublet microtubules (DMTs) in cilia axoneme, which is required for motile cilia beating. Plays a role in spermatogenesis by enhancing the binding of CREM isoform tau to its coactivator FHL5 and increasing the FHL5-regulated transcriptional activation of CREM isoform tau. Involved in the acrosome reaction and in binding of sperm to the zona pellucida. Plays a role in regulation of the cell cycle by controlling progression through the G2/M phase, possibly by delaying the activation of CDK1 which is required for entry into mitosis. May play a role in fertility and microtubule formation through interaction with RANBP9. This chain is Sperm-associated antigen 8, found in Homo sapiens (Human).